Here is a 318-residue protein sequence, read N- to C-terminus: Ribosomal protein L11 methyltransferase (318 aa).

Positions 161, 182, 204, and 247 each coordinate S-adenosyl-L-methionine.

It belongs to the methyltransferase superfamily. PrmA family.

Its subcellular location is the cytoplasm. The catalysed reaction is L-lysyl-[protein] + 3 S-adenosyl-L-methionine = N(6),N(6),N(6)-trimethyl-L-lysyl-[protein] + 3 S-adenosyl-L-homocysteine + 3 H(+). Methylates ribosomal protein L11. The protein is Ribosomal protein L11 methyltransferase of Moorella thermoacetica (strain ATCC 39073 / JCM 9320).